Consider the following 83-residue polypeptide: Small ribosomal subunit protein uS17 (83 aa).

It belongs to the universal ribosomal protein uS17 family. Part of the 30S ribosomal subunit.

Its function is as follows. One of the primary rRNA binding proteins, it binds specifically to the 5'-end of 16S ribosomal RNA. This Acaryochloris marina (strain MBIC 11017) protein is Small ribosomal subunit protein uS17.